Consider the following 117-residue polypeptide: Ribosomal silencing factor RsfS (117 aa).

It belongs to the Iojap/RsfS family. Interacts with ribosomal protein uL14 (rplN).

It localises to the cytoplasm. In terms of biological role, functions as a ribosomal silencing factor. Interacts with ribosomal protein uL14 (rplN), blocking formation of intersubunit bridge B8. Prevents association of the 30S and 50S ribosomal subunits and the formation of functional ribosomes, thus repressing translation. This is Ribosomal silencing factor RsfS from Halalkalibacterium halodurans (strain ATCC BAA-125 / DSM 18197 / FERM 7344 / JCM 9153 / C-125) (Bacillus halodurans).